A 375-amino-acid chain; its full sequence is DNA replication and repair protein RecF (375 aa).

ATP is bound at residue 34-41; that stretch reads GDNGAGKT.

The protein belongs to the RecF family.

The protein localises to the cytoplasm. Its function is as follows. The RecF protein is involved in DNA metabolism; it is required for DNA replication and normal SOS inducibility. RecF binds preferentially to single-stranded, linear DNA. It also seems to bind ATP. In Rhizobium rhizogenes (strain K84 / ATCC BAA-868) (Agrobacterium radiobacter), this protein is DNA replication and repair protein RecF.